The chain runs to 512 residues: Maturase K (512 aa).

It belongs to the intron maturase 2 family. MatK subfamily.

The protein localises to the plastid. The protein resides in the chloroplast. Its function is as follows. Usually encoded in the trnK tRNA gene intron. Probably assists in splicing its own and other chloroplast group II introns. The chain is Maturase K from Lilium regale (Regal lily).